The following is a 249-amino-acid chain: Probable transcriptional regulatory protein mll3945 (249 aa).

The protein belongs to the TACO1 family.

The protein localises to the cytoplasm. In Mesorhizobium japonicum (strain LMG 29417 / CECT 9101 / MAFF 303099) (Mesorhizobium loti (strain MAFF 303099)), this protein is Probable transcriptional regulatory protein mll3945.